Reading from the N-terminus, the 391-residue chain is Phosphoglycerate kinase (391 aa).

Residues Asp-21 to Asn-23, Arg-36, His-59 to Arg-62, Arg-113, and Arg-146 contribute to the substrate site. Residues Lys-197, Glu-319, and Gly-345–Thr-348 contribute to the ATP site.

Belongs to the phosphoglycerate kinase family. In terms of assembly, monomer.

The protein resides in the cytoplasm. The enzyme catalyses (2R)-3-phosphoglycerate + ATP = (2R)-3-phospho-glyceroyl phosphate + ADP. It functions in the pathway carbohydrate degradation; glycolysis; pyruvate from D-glyceraldehyde 3-phosphate: step 2/5. This Shewanella sp. (strain MR-7) protein is Phosphoglycerate kinase.